The primary structure comprises 222 residues: 2-C-methyl-D-erythritol 4-phosphate cytidylyltransferase (222 aa).

Belongs to the IspD/TarI cytidylyltransferase family. IspD subfamily.

The enzyme catalyses 2-C-methyl-D-erythritol 4-phosphate + CTP + H(+) = 4-CDP-2-C-methyl-D-erythritol + diphosphate. The protein operates within isoprenoid biosynthesis; isopentenyl diphosphate biosynthesis via DXP pathway; isopentenyl diphosphate from 1-deoxy-D-xylulose 5-phosphate: step 2/6. Functionally, catalyzes the formation of 4-diphosphocytidyl-2-C-methyl-D-erythritol from CTP and 2-C-methyl-D-erythritol 4-phosphate (MEP). This chain is 2-C-methyl-D-erythritol 4-phosphate cytidylyltransferase, found in Porphyromonas gingivalis (strain ATCC 33277 / DSM 20709 / CIP 103683 / JCM 12257 / NCTC 11834 / 2561).